The sequence spans 554 residues: Flavin-dependent halogenase ascD (554 aa).

The FAD site is built by Gly-15, Gly-18, and Glu-48. Positions 331 and 332 each coordinate chloride. Val-333 provides a ligand contact to FAD.

This sequence belongs to the flavin-dependent halogenase family.

It carries out the reaction ilicicolin B + FADH2 + chloride + O2 = ilicicolin A + FAD + 2 H2O + H(+). It participates in secondary metabolite biosynthesis; terpenoid biosynthesis. Functionally, flavin-dependent halogenase; part of the asc-1 gene cluster that mediates the biosynthesis of both ascochlorin and ascofuranone, a strong inhibitor of cyanide-insensitive alternative oxidases and a promising drug candidate against African trypanosomiasis. The first step in the pathway is performed by the non-reducing polyketide synthase ascC that produces orsellinic acid by condensing acetyl-CoA with 3 malonyl-CoA units. Orsellinic acid is then prenylated by the prenyltransferase ascA to yield ilicicolinic acid B. Ilicicolinic acid B is further reduced to ilicicolin B by the reductase ascB. The halogenase ascD then chlorinates ilicicolin B to produce ilicicolin A which is converted to ilicicolin A epoxide by the cytochrome P450 monooxygenase ascE that catalyzes stereoselective epoxidation of the terminal double bond of the prenyl group. Ilicicolin A epoxide is the last common precursor for the biosynthesis of ascofuranone and ascochlorin. The terpene cyclase ascF produces a monocyclic terpene, and the cyclization reaction is proposed to be initiated by protonation of the terminal epoxide of ilicicolin A epoxide to generate a monocyclic tertiarycation, which is followed by a series of hydride and methyl shifts with abstraction of proton, leading to the formation of the (14S,15R,19R)-trimethylcyclohexanone ring structure of ilicicolin C, which is finally reduced to ascochlorin by the dehydrogenase ascG. On the other hand, ilicicolin A epoxide is hydroxylated by the cytochrome P450 monooxygenase ascH, and the resultant product is cyclized by the terpene cyclase ascI to ascofuranol via protonation-initiated epoxide ring opening, which facilitates the 6-endo-tet cyclization to form the tetrahy-drofuran ring. Finally, ascofuranol is oxidized into ascofuranone by ascJ. The sequence is that of Flavin-dependent halogenase ascD from Acremonium egyptiacum (Oospora egyptiaca).